Reading from the N-terminus, the 348-residue chain is Dihydroorotase (348 aa).

Positions 14 and 16 each coordinate Zn(2+). Residues histidine 16–arginine 18 and asparagine 42 contribute to the substrate site. Zn(2+) is bound by residues lysine 100, histidine 137, and histidine 175. Residue lysine 100 is modified to N6-carboxylysine. Residue histidine 137 coordinates substrate. Residue leucine 220 coordinates substrate. Residue aspartate 248 participates in Zn(2+) binding. Residue aspartate 248 is part of the active site. The substrate site is built by histidine 252 and alanine 264.

This sequence belongs to the metallo-dependent hydrolases superfamily. DHOase family. Class II DHOase subfamily. Homodimer. Requires Zn(2+) as cofactor.

It catalyses the reaction (S)-dihydroorotate + H2O = N-carbamoyl-L-aspartate + H(+). The protein operates within pyrimidine metabolism; UMP biosynthesis via de novo pathway; (S)-dihydroorotate from bicarbonate: step 3/3. In terms of biological role, catalyzes the reversible cyclization of carbamoyl aspartate to dihydroorotate. The sequence is that of Dihydroorotase from Pseudomonas putida (strain GB-1).